A 263-amino-acid polypeptide reads, in one-letter code: 3-methyl-2-oxobutanoate hydroxymethyltransferase (263 aa).

Mg(2+) is bound by residues Asp-45 and Asp-84. Residues 45–46 (DS), Asp-84, and Lys-112 contribute to the 3-methyl-2-oxobutanoate site. Glu-114 serves as a coordination point for Mg(2+). Residue Glu-181 is the Proton acceptor of the active site.

Belongs to the PanB family. In terms of assembly, homodecamer; pentamer of dimers. Mg(2+) is required as a cofactor.

It localises to the cytoplasm. The catalysed reaction is 3-methyl-2-oxobutanoate + (6R)-5,10-methylene-5,6,7,8-tetrahydrofolate + H2O = 2-dehydropantoate + (6S)-5,6,7,8-tetrahydrofolate. It participates in cofactor biosynthesis; (R)-pantothenate biosynthesis; (R)-pantoate from 3-methyl-2-oxobutanoate: step 1/2. Its function is as follows. Catalyzes the reversible reaction in which hydroxymethyl group from 5,10-methylenetetrahydrofolate is transferred onto alpha-ketoisovalerate to form ketopantoate. This Buchnera aphidicola subsp. Acyrthosiphon pisum (strain APS) (Acyrthosiphon pisum symbiotic bacterium) protein is 3-methyl-2-oxobutanoate hydroxymethyltransferase.